Consider the following 178-residue polypeptide: Alkyl hydroperoxide reductase AhpD (178 aa).

Residue C131 is the Proton donor of the active site. A disulfide bridge connects residues C131 and C134. C134 serves as the catalytic Cysteine sulfenic acid (-SOH) intermediate.

This sequence belongs to the AhpD family. In terms of assembly, homotrimer.

It carries out the reaction N(6)-[(R)-dihydrolipoyl]-L-lysyl-[lipoyl-carrier protein] + a hydroperoxide = N(6)-[(R)-lipoyl]-L-lysyl-[lipoyl-carrier protein] + an alcohol + H2O. Its function is as follows. Antioxidant protein with alkyl hydroperoxidase activity. Required for the reduction of the AhpC active site cysteine residues and for the regeneration of the AhpC enzyme activity. The chain is Alkyl hydroperoxide reductase AhpD from Streptomyces coelicolor (strain ATCC BAA-471 / A3(2) / M145).